Consider the following 142-residue polypeptide: Protein lin-32 (142 aa).

Residues 30–48 (PLQSPNFSLDSPNYPDSLS) are compositionally biased toward polar residues. The segment at 30 to 66 (PLQSPNFSLDSPNYPDSLSNGGGKDDKKKCRRYKTPS) is disordered. The bHLH domain maps to 72 to 124 (MRRSAANERERRRMNTLNVAYDELREVLPEIDSGKKLSKFETLQMAQKYIECL).

Forms a heterodimer with hlh-2. As to expression, expressed in PVD motor neurons.

Its subcellular location is the nucleus. Probable transcription factor which binds the E box motif 5'-CA[TC][AG]TG-3'. Essential for the specification of the neuroblast cell fate in the development of peripheral sense organs. Its role in the generation of sensory neurons may be through positively regulating the expression of the zinc finger protein ztf-11 during postdeirid neurogenesis. Required for specification of cell fate, acting in concert with lin-32, in the development of the male-specific genital sensilla (simple sense organs) known as rays. Involved in regulating glial specification, perhaps by suppressing a glial fate in different lineages during early embryogenesis. The polypeptide is Protein lin-32 (Caenorhabditis elegans).